The primary structure comprises 385 residues: Enoyl-[acyl-carrier-protein] reductase, mitochondrial (385 aa).

Y78 functions as the Proton donor in the catalytic mechanism. Residues N162, 190-193 (TSGV), 213-215 (RDR), 288-291 (YGGM), 313-315 (YWV), and K378 contribute to the NADP(+) site.

Belongs to the zinc-containing alcohol dehydrogenase family. Quinone oxidoreductase subfamily. In terms of assembly, homodimer.

It localises to the mitochondrion matrix. It catalyses the reaction a 2,3-saturated acyl-[ACP] + NADP(+) = a (2E)-enoyl-[ACP] + NADPH + H(+). Its function is as follows. Catalyzes the NADPH-dependent reduction of trans-2-enoyl thioesters in mitochondrial fatty acid synthesis (fatty acid synthesis type II). Fatty acid chain elongation in mitochondria uses acyl carrier protein (ACP) as an acyl group carrier, but the enzyme accepts both ACP and CoA thioesters as substrates in vitro. Required for respiration and the maintenance of the mitochondrial compartment. This Candida glabrata (strain ATCC 2001 / BCRC 20586 / JCM 3761 / NBRC 0622 / NRRL Y-65 / CBS 138) (Yeast) protein is Enoyl-[acyl-carrier-protein] reductase, mitochondrial (ETR1).